Consider the following 327-residue polypeptide: GTPase Obg (327 aa).

In terms of domain architecture, Obg spans 2-160; that stretch reads HLFKDSLNLI…LNLRLELSLI (159 aa). The region spanning 161 to 326 is the OBG-type G domain; it reads ADVGLVGLPN…LVSEFFSLAK (166 aa). GTP contacts are provided by residues 167 to 174, 192 to 196, 213 to 216, 280 to 283, and 307 to 309; these read GLPNAGKS, FTTKI, DLPG, SKLD, and SIY. The Mg(2+) site is built by Ser-174 and Thr-194.

Belongs to the TRAFAC class OBG-HflX-like GTPase superfamily. OBG GTPase family. Monomer. It depends on Mg(2+) as a cofactor.

The protein localises to the cytoplasm. Its function is as follows. An essential GTPase which binds GTP, GDP and possibly (p)ppGpp with moderate affinity, with high nucleotide exchange rates and a fairly low GTP hydrolysis rate. Plays a role in control of the cell cycle, stress response, ribosome biogenesis and in those bacteria that undergo differentiation, in morphogenesis control. The chain is GTPase Obg from Borrelia recurrentis (strain A1).